Consider the following 1043-residue polypeptide: MEFVRALWLGLALALGPGSAGGHPQPCGVLARLGGSVRLGALLPRAPLARARARAALARAALAPRLPHNLSLELVVAAPPARDPASLTRGLCQALVPPGVAALLAFPEARPELLQLHFLAAATETPVLSLLRREARAPLGAPNPFHLQLHWASPLETLLDVLVAVLQAHAWEDVGLALCRTQDPGGLVALWTSRAGRPPQLVLDLSRRDTGDAGLRARLAPMAAPVGGEAPVPAAVLLGCDIARARRVLEAVPPGPHWLLGTPLPPKALPTAGLPPGLLALGEVARPPLEAAIHDIVQLVARALGSAAQVQPKRALLPAPVNCGDLQPAGPESPGRFLARFLANTSFQGRTGPVWVTGSSQVHMSRHFKVWSLRRDPRGAPAWATVGSWRDGQLDLEPGGASARPPPPQGAQVWPKLRVVTLLEHPFVFARDPDEDGQCPAGQLCLDPGTNDSATLDALFAALANGSAPRALRKCCYGYCIDLLERLAEDTPFDFELYLVGDGKYGALRDGRWTGLVGDLLAGRAHMAVTSFSINSARSQVVDFTSPFFSTSLGIMVRARDTASPIGAFMWPLHWSTWLGVFAALHLTALFLTVYEWRSPYGLTPRGRNRSTVFSYSSALNLCYAILFRRTVSSKTPKCPTGRLLMNLWAIFCLLVLSSYTANLAAVMVGDKTFEELSGIHDPKLHHPAQGFRFGTVWESSAEAYIKKSFPDMHAHMRRHSAPTTPRGVAMLTSDPPKLNAFIMDKSLLDYEVSIDADCKLLTVGKPFAIEGYGIGLPQNSPLTSNLSEFISRYKSSGFIDLLHDKWYKMVPCGKRVFAVTETLQMSIYHFAGLFVLLCLGLGSALLSSLGEHAFFRLALPRIRKGSRLQYWLHTSQKIHRALNTEPPEGSKEETAEAEPSGPEVEQQQQQQDQPTAPEGWKRARRAVDKERRVRFLLEPAVVVAPEADAEAEAAPREGPVWLCSYGRPPAARPTGAPQPGELQELERRIEVARERLRQALVRRGQLLAQLGDSARHRPRRLLQARAAPAEAPPHSGRPGSQE.

Residues 1–22 (MEFVRALWLGLALALGPGSAGG) form the signal peptide. The Extracellular segment spans residues 23–574 (HPQPCGVLAR…PIGAFMWPLH (552 aa)). 4 N-linked (GlcNAc...) asparagine glycosylation sites follow: N69, N344, N451, and N465. 2 disulfide bridges follow: C439–C475 and C445–C476. Glycine contacts are provided by S531, S533, and R538. 2 residues coordinate D-serine: S533 and R538. A helical transmembrane segment spans residues 575-594 (WSTWLGVFAALHLTALFLTV). At 595–615 (YEWRSPYGLTPRGRNRSTVFS) the chain is on the cytoplasmic side. The discontinuously helical intramembrane region spans 616 to 627 (YSSALNLCYAIL). The Cytoplasmic segment spans residues 628-641 (FRRTVSSKTPKCPT). Residues 642-661 (GRLLMNLWAIFCLLVLSSYT) traverse the membrane as a helical segment. Residues 662 to 832 (ANLAAVMVGD…TLQMSIYHFA (171 aa)) lie on the Extracellular side of the membrane. S701 is a glycine binding site. D-serine-binding residues include S701, A702, and D745. Position 745 (D745) interacts with glycine. An N-linked (GlcNAc...) asparagine glycan is attached at N786. A helical membrane pass occupies residues 833–848 (GLFVLLCLGLGSALLS). Over 849-1043 (SLGEHAFFRL…PHSGRPGSQE (195 aa)) the chain is Cytoplasmic. Disordered stretches follow at residues 882–924 (ALNT…WKRA) and 1012–1043 (GDSA…GSQE). The interval 979 to 1012 (QPGELQELERRIEVARERLRQALVRRGQLLAQLG) is involved in the trafficking and surface expression of NMDARs. Low complexity predominate over residues 1024–1035 (QARAAPAEAPPH).

The protein belongs to the glutamate-gated ion channel (TC 1.A.10.1) family. NR3B/GRIN3B subfamily. In terms of assembly, forms heterotetrameric channels that contain at least two GluN1 subunits and at least a combination of one GluN2 and one GluN3 subunits (in vitro). Forms heterotetrameric channels composed of two GluN1/zeta subunits (GRIN1), and two identical GluN3 subunits (GRIN3A or GRIN3B) (in vitro). Does not form functional homomeric channels.

The protein localises to the cell membrane. It localises to the postsynaptic cell membrane. The enzyme catalyses Ca(2+)(in) = Ca(2+)(out). It carries out the reaction Na(+)(in) = Na(+)(out). In terms of biological role, component of a non-conventional N-methyl-D-aspartate (NMDA) receptors (NMDARs) that function as heterotetrameric, ligand-gated cation channels with low calcium permeability and low voltage-dependent block by Mg(2+). Forms glutamatergic receptor complexes with GluN1 and GluN2 subunits which are activated by glycine binding to the GluN1 and GluN3 subunits and L-glutamate binding to GluN2 subunits. Forms excitatory glycinergic receptor complexes with GluN1 alone which are activated by glycine binding to the GluN1 and GluN3 subunits. GluN3B subunit also binds D-serine and, in the absence of glycine, activates glycinergic receptor complexes, but with lower efficacy than glycine. Each GluN3 subunit confers differential attributes to channel properties, including activation, deactivation and desensitization kinetics, pH sensitivity, Ca2(+) permeability, and binding to allosteric modulators. In Homo sapiens (Human), this protein is Glutamate receptor ionotropic, NMDA 3B.